We begin with the raw amino-acid sequence, 441 residues long: UBX domain-containing protein 6 (441 aa).

The mediates interaction with LMAN1 stretch occupies residues 1-10 (MKKFFQEIKA). 3 disordered regions span residues 12-57 (IKFK…MAAA), 62-81 (RLEQKQPRARGPTSQDSIRN), and 86-113 (ELRAEAAVSGDPEAPGSNTAPEPKEEGS). A compositionally biased stretch (basic and acidic residues) spans 27 to 36 (VGEKAPKEKP). The interval 51-63 (EAQMAAAAALARL) is VCP/p97-interacting motif (VIM). The PUB domain occupies 175-244 (VDTIAKYLDN…GPEEFYVLSE (70 aa)). Residues 332–408 (RKYTYTLLRV…GLVPSALLTF (77 aa)) enclose the UBX domain.

Interacts with VCP through the PUB domain (via C-terminus) and VIM motif (via N-terminus); the interaction is direct. Forms a ternary complex with CAV1 and VCP. Interacts with SYVN1. Interacts with HERPUD1. Interacts with VCPKMT. May interact with DERL1. Interacts with PLAA, VCP and YOD1; may form a complex involved in macroautophagy. Interacts with LMAN1.

The protein localises to the cytoplasm. The protein resides in the cytosol. Its subcellular location is the membrane. It is found in the nucleus. It localises to the cytoskeleton. The protein localises to the microtubule organizing center. The protein resides in the centrosome. Its subcellular location is the early endosome membrane. It is found in the late endosome membrane. It localises to the lysosome membrane. Its function is as follows. May negatively regulate the ATPase activity of VCP, an ATP-driven segregase that associates with different cofactors to control a wide variety of cellular processes. As a cofactor of VCP, it may play a role in the transport of CAV1 to lysosomes for degradation. It may also play a role in endoplasmic reticulum-associated degradation (ERAD) of misfolded proteins. Together with VCP and other cofactors, it may play a role in macroautophagy, regulating for instance the clearance of damaged lysosomes. The sequence is that of UBX domain-containing protein 6 from Bos taurus (Bovine).